The chain runs to 511 residues: Maturase K (511 aa).

The protein belongs to the intron maturase 2 family. MatK subfamily.

It is found in the plastid. The protein resides in the chloroplast. Its function is as follows. Usually encoded in the trnK tRNA gene intron. Probably assists in splicing its own and other chloroplast group II introns. This chain is Maturase K, found in Primula veris (Cowslip).